The following is a 281-amino-acid chain: MKKRYWMAPLLIAAAGLAAFWSIFTIPTQPELVTIGRNQQGEPLLCYQHPQSEVLDLDGELNLLVWNIYKQNRANWSTQLTELSRDQQLLLLQEANMTPAFKEWIHQLGWDGTQARAFEAFGETAGVINLAKVMPTMACAYTQLEPWLRLPKSAIYARYRLSDGQELVVVNLHAVNFTYGTQEYQQQLIALLDELRDFTGPVIVAGDFNSWSEARMALLSTQLASVGLQEVRFSPDNRTTFINGLPLDHVFYRGLQLEKAEAPISDASDHNPLLVRFRLLN.

This sequence belongs to the UPF0294 family.

The protein localises to the cytoplasm. The protein is UPF0294 protein VC_2238 of Vibrio cholerae serotype O1 (strain ATCC 39315 / El Tor Inaba N16961).